The following is a 231-amino-acid chain: Urease accessory protein UreE (231 aa).

Positions 185 to 231 (VASPLDEPHGSGLHIHGIHSHEEGHSHGDHDHDHSHSHGDHDHDHKH) are disordered. Residues 203–231 (HSHEEGHSHGDHDHDHSHSHGDHDHDHKH) are compositionally biased toward basic and acidic residues.

This sequence belongs to the UreE family.

The protein localises to the cytoplasm. Involved in urease metallocenter assembly. Binds nickel. Probably functions as a nickel donor during metallocenter assembly. This Yersinia pestis bv. Antiqua (strain Antiqua) protein is Urease accessory protein UreE.